The chain runs to 117 residues: Probable non-functional immunoglobulinn kappa variable 1-37 (117 aa).

An N-terminal signal peptide occupies residues 1 to 22 (MDMRVPAQLLGLLLLWVPGARC). The Ig-like domain maps to 24 to 117 (IQLTQSPSSL…YYGQRTYNAP (94 aa)).

In terms of assembly, most probably, the immunoglobulin is not assembled due to incorrect folding of light chain. Immunoglobulins are composed of two identical heavy chains and two identical light chains; disulfide-linked.

It is found in the secreted. The protein localises to the cell membrane. Functionally, probable non-functional open reading frame (ORF) of V region of the variable domain of immunoglobulin light chains. Non-functional ORF generally cannot participate in the synthesis of a productive immunoglobulin chain due to altered V-(D)-J or switch recombination and/or splicing site (at mRNA level) and/or conserved amino acid change (protein level). Immunoglobulins, also known as antibodies, are membrane-bound or secreted glycoproteins produced by B lymphocytes. In the recognition phase of humoral immunity, the membrane-bound immunoglobulins serve as receptors which, upon binding of a specific antigen, trigger the clonal expansion and differentiation of B lymphocytes into immunoglobulins-secreting plasma cells. Secreted immunoglobulins mediate the effector phase of humoral immunity, which results in the elimination of bound antigens. The antigen binding site is formed by the variable domain of one heavy chain, together with that of its associated light chain. Thus, each immunoglobulin has two antigen binding sites with remarkable affinity for a particular antigen. The variable domains are assembled by a process called V-(D)-J rearrangement and can then be subjected to somatic hypermutations which, after exposure to antigen and selection, allow affinity maturation for a particular antigen. In Homo sapiens (Human), this protein is Probable non-functional immunoglobulinn kappa variable 1-37.